Reading from the N-terminus, the 463-residue chain is MGCKGIEDVAMNGRLKKEIEENGFGKMTEVQLKCIPEVLKGKDVVVQSPTGTGKTMAFLAPILSCIYDGKGRGRPGVTAVVITPTRELALQIREVAGLFDVKCECFIGGMSIEEDYKRMKEEFSIAVGTPGRLLEIVGKETKKFSSLSHLVLDEADKLLGFGFEEKLMQLLAKLPRNRVTGLFSATRNDSVDKLSRVFLRNPVSINVGNNEMPVALEYIVVSPMEKLLVLMDIVTGRRCIVFFATCSEVDFFSGLVSRAGFGNICKIHGKISQDERNRVYEEFFQRDGLLFCTDVAARGIDFRGVDLVVHFDVPKEYSSIVHRSGRTARNGSKGESVLFVMPNERAYVEFLKLKGIPAVESSYRMKSSLSYQDIKSMISPELLGLSVKAFVSYIRSYKEHFVSYILDYKGLDFDSLAELFFLERIPGMAELRNVKFEKFTKPARDGKKRALPKKKYRKKRAIK.

The Q motif signature appears at 4-32; the sequence is KGIEDVAMNGRLKKEIEENGFGKMTEVQL. Residues 35-205 enclose the Helicase ATP-binding domain; sequence IPEVLKGKDV…RVFLRNPVSI (171 aa). 48-55 contacts ATP; that stretch reads SPTGTGKT. The short motif at 153-156 is the DEAD box element; it reads DEAD. A Helicase C-terminal domain is found at 226–382; it reads KLLVLMDIVT…DIKSMISPEL (157 aa). Positions 444–463 are disordered; it reads RDGKKRALPKKKYRKKRAIK. The span at 446-463 shows a compositional bias: basic residues; sequence GKKRALPKKKYRKKRAIK.

Belongs to the DEAD box helicase family. DDX55/SPB4 subfamily. As to quaternary structure, component of pre-60S ribosomal complexes.

Its subcellular location is the nucleus. The protein resides in the nucleolus. The enzyme catalyses ATP + H2O = ADP + phosphate + H(+). In terms of biological role, ATP-binding RNA helicase involved in the biogenesis of 60S ribosomal subunits. Binds 90S pre-ribosomal particles and dissociates from pre-60S ribosomal particles after processing of 27SB pre-rRNA. Required for the normal formation of 18S rRNA through the processing of pre-rRNAs at sites A0, A1 and A2, and the normal formation of 25S and 5.8S rRNAs through the processing of pre-rRNAs at sites C1 and C2. The protein is ATP-dependent rRNA helicase SPB4 of Encephalitozoon cuniculi (strain GB-M1) (Microsporidian parasite).